Reading from the N-terminus, the 391-residue chain is GTPase Obg (391 aa).

Residues 1 to 159 (MKFVDEARIL…RELMLELMLL (159 aa)) form the Obg domain. Positions 160–333 (ADVGMLGMPN…LCWDIMEFMK (174 aa)) constitute an OBG-type G domain. Residues 166-173 (GMPNAGKS), 191-195 (FTTLV), 213-216 (DIPG), 283-286 (NKVD), and 314-316 (SAI) each bind GTP. Positions 173 and 193 each coordinate Mg(2+).

Belongs to the TRAFAC class OBG-HflX-like GTPase superfamily. OBG GTPase family. As to quaternary structure, monomer. The cofactor is Mg(2+).

The protein resides in the cytoplasm. Its function is as follows. An essential GTPase which binds GTP, GDP and possibly (p)ppGpp with moderate affinity, with high nucleotide exchange rates and a fairly low GTP hydrolysis rate. Plays a role in control of the cell cycle, stress response, ribosome biogenesis and in those bacteria that undergo differentiation, in morphogenesis control. The chain is GTPase Obg from Photorhabdus laumondii subsp. laumondii (strain DSM 15139 / CIP 105565 / TT01) (Photorhabdus luminescens subsp. laumondii).